The chain runs to 105 residues: UPF0145 protein (105 aa).

It belongs to the UPF0145 family.

The polypeptide is UPF0145 protein (Enterococcus faecalis (Streptococcus faecalis)).